The following is a 270-amino-acid chain: MAVGKNKGTSKGGKKGSKKKVVDPFTRKDWYDVKAPNMFSCRQVGKTLVNRTQGTRIASDGLKGRVFEVSLADLQNDTDAERSFRKFKLIAEDVHGRNVLCNFHGMDLTTDKLRSMVKKWQTLIECSVDVKTTDNYLLRVFCIGFTIKDQVSQRKTCYAQHSQIKAIRKNMTQIITNNVTSSDLKEVVNKLLPDSIAKDIEKACQGVYPLHDVYIRKVKVLKKPRFDLANLLELHGDGGGKGAEVSTGAAEGGVVVDRPEGYEPPVQESV.

Disordered regions lie at residues 1-20 (MAVG…SKKK) and 238-270 (GGGK…QESV).

The protein belongs to the eukaryotic ribosomal protein eS1 family. As to quaternary structure, component of the small ribosomal subunit. Mature ribosomes consist of a small (40S) and a large (60S) subunit. The 40S subunit contains about 33 different proteins and 1 molecule of RNA (18S). The 60S subunit contains about 49 different proteins and 3 molecules of RNA (28S, 5.8S and 5S).

The protein localises to the cytoplasm. The protein is Small ribosomal subunit protein eS1 of Culex quinquefasciatus (Southern house mosquito).